Consider the following 374-residue polypeptide: Tetraacyldisaccharide 4'-kinase (374 aa).

43–50 (TMGGTGKT) is an ATP binding site.

The protein belongs to the LpxK family.

It catalyses the reaction a lipid A disaccharide + ATP = a lipid IVA + ADP + H(+). The protein operates within glycolipid biosynthesis; lipid IV(A) biosynthesis; lipid IV(A) from (3R)-3-hydroxytetradecanoyl-[acyl-carrier-protein] and UDP-N-acetyl-alpha-D-glucosamine: step 6/6. Transfers the gamma-phosphate of ATP to the 4'-position of a tetraacyldisaccharide 1-phosphate intermediate (termed DS-1-P) to form tetraacyldisaccharide 1,4'-bis-phosphate (lipid IVA). This is Tetraacyldisaccharide 4'-kinase from Leptospira biflexa serovar Patoc (strain Patoc 1 / Ames).